Reading from the N-terminus, the 359-residue chain is NADH-quinone oxidoreductase subunit H (359 aa).

8 consecutive transmembrane segments (helical) span residues 16–36 (IWPA…CVLL), 94–114 (GLFV…WAVI), 129–149 (LLFL…AGWA), 167–187 (VSYE…SASL), 208–228 (FLSW…ISGL), 261–281 (FFLA…ILFL), 296–316 (IPGW…FLWV), and 331–351 (LGWK…GAWM).

It belongs to the complex I subunit 1 family. NDH-1 is composed of 14 different subunits. Subunits NuoA, H, J, K, L, M, N constitute the membrane sector of the complex.

Its subcellular location is the cell inner membrane. The enzyme catalyses a quinone + NADH + 5 H(+)(in) = a quinol + NAD(+) + 4 H(+)(out). Its function is as follows. NDH-1 shuttles electrons from NADH, via FMN and iron-sulfur (Fe-S) centers, to quinones in the respiratory chain. The immediate electron acceptor for the enzyme in this species is believed to be ubiquinone. Couples the redox reaction to proton translocation (for every two electrons transferred, four hydrogen ions are translocated across the cytoplasmic membrane), and thus conserves the redox energy in a proton gradient. This subunit may bind ubiquinone. The polypeptide is NADH-quinone oxidoreductase subunit H (Polaromonas sp. (strain JS666 / ATCC BAA-500)).